The primary structure comprises 182 residues: Probable peptidyl-prolyl cis-trans isomerase A (182 aa).

Positions 13–181 (QNATATLHTN…EPVVIDSITI (169 aa)) constitute a PPIase cyclophilin-type domain. The segment at 161 to 182 (TTATDGNDRPTEPVVIDSITIS) is disordered.

Belongs to the cyclophilin-type PPIase family.

Its subcellular location is the cytoplasm. The catalysed reaction is [protein]-peptidylproline (omega=180) = [protein]-peptidylproline (omega=0). In terms of biological role, PPIases accelerate the folding of proteins. It catalyzes the cis-trans isomerization of proline imidic peptide bonds in oligopeptides. The sequence is that of Probable peptidyl-prolyl cis-trans isomerase A (ppiA) from Mycobacterium leprae (strain TN).